The chain runs to 311 residues: Ribosomal protein L11 methyltransferase (311 aa).

S-adenosyl-L-methionine is bound by residues Thr162, Gly183, Asp205, and Asn248.

Belongs to the methyltransferase superfamily. PrmA family.

The protein localises to the cytoplasm. The enzyme catalyses L-lysyl-[protein] + 3 S-adenosyl-L-methionine = N(6),N(6),N(6)-trimethyl-L-lysyl-[protein] + 3 S-adenosyl-L-homocysteine + 3 H(+). Methylates ribosomal protein L11. The polypeptide is Ribosomal protein L11 methyltransferase (Bacillus subtilis (strain 168)).